Here is a 133-residue protein sequence, read N- to C-terminus: Phosphomevalonate dehydratase small subunit (133 aa).

S62 (proton acceptor) is an active-site residue.

This sequence belongs to the AcnX type II small subunit family. As to quaternary structure, heterodimer composed of a large subunit (PMDh-L) and a small subunit (PMDh-S).

It catalyses the reaction (R)-5-phosphomevalonate = (2E)-3-methyl-5-phosphooxypent-2-enoate + H2O. It participates in isoprenoid biosynthesis; isopentenyl diphosphate biosynthesis via mevalonate pathway. Its function is as follows. Component of a hydro-lyase that catalyzes the dehydration of mevalonate 5-phosphate (MVA5P) to form trans-anhydromevalonate 5-phosphate (tAHMP). Involved in the archaeal mevalonate (MVA) pathway, which provides fundamental precursors for isoprenoid biosynthesis, such as isopentenyl diphosphate (IPP) and dimethylallyl diphosphate (DMAPP). This is Phosphomevalonate dehydratase small subunit from Thermococcus kodakarensis (strain ATCC BAA-918 / JCM 12380 / KOD1) (Pyrococcus kodakaraensis (strain KOD1)).